The chain runs to 683 residues: Long-chain-fatty-acid--CoA ligase 5 (683 aa).

The helical; Signal-anchor for type III membrane protein transmembrane segment at 12-32 threads the bilayer; the sequence is LPTPALICILTFGAAIFLWLI. I32 is subject to Phosphoserine. At 33 to 683 the chain is on the cytoplasmic side; sequence TRPQPVLPLL…IDSLYEHIQD (651 aa). K361 carries the N6-acetyllysine modification.

The protein belongs to the ATP-dependent AMP-binding enzyme family. Mg(2+) serves as cofactor.

The protein resides in the mitochondrion. It is found in the endoplasmic reticulum. It localises to the mitochondrion outer membrane. The protein localises to the endoplasmic reticulum membrane. Its subcellular location is the cell membrane. The catalysed reaction is a long-chain fatty acid + ATP + CoA = a long-chain fatty acyl-CoA + AMP + diphosphate. It carries out the reaction (5Z,8Z,11Z,14Z)-eicosatetraenoate + ATP + CoA = (5Z,8Z,11Z,14Z)-eicosatetraenoyl-CoA + AMP + diphosphate. The enzyme catalyses hexadecanoate + ATP + CoA = hexadecanoyl-CoA + AMP + diphosphate. It catalyses the reaction (E)-hexadec-2-enoate + ATP + CoA = (2E)-hexadecenoyl-CoA + AMP + diphosphate. The catalysed reaction is 15-hydroxy-(5Z,8Z,11Z,13E)-eicosatetraenoate + ATP + CoA = 15-hydroxy-(5Z,8Z,11Z,13E)-eicosatetraenoyl-CoA + AMP + diphosphate. It carries out the reaction 12-hydroxy-(5Z,8Z,10E,14Z)-eicosatetraenoate + ATP + CoA = 12-hydroxy-(5Z,8Z,10E,14Z)-eicosatetraenoyl-CoA + AMP + diphosphate. The enzyme catalyses 5-hydroxy-(6E,8Z,11Z,14Z)-eicosatetraenoate + ATP + CoA = 5-hydroxy-(6E,8Z,11Z,14Z)-eicosatetraenoyl-CoA + AMP + diphosphate. It catalyses the reaction 14,15-epoxy-(5Z,8Z,11Z)-eicosatrienoate + ATP + CoA = 14,15-epoxy-(5Z,8Z,11Z)-eicosatrienoyl-CoA + AMP + diphosphate. The catalysed reaction is 11,12-epoxy-(5Z,8Z,14Z)-eicosatrienoate + ATP + CoA = 11,12-epoxy-(5Z,8Z,14Z)-eicosatrienoyl-CoA + AMP + diphosphate. It carries out the reaction (9Z)-octadecenoate + ATP + CoA = (9Z)-octadecenoyl-CoA + AMP + diphosphate. Functionally, catalyzes the conversion of long-chain fatty acids to their active form acyl-CoAs for both synthesis of cellular lipids, and degradation via beta-oxidation. ACSL5 may activate fatty acids from exogenous sources for the synthesis of triacylglycerol destined for intracellular storage. Utilizes a wide range of saturated fatty acids with a preference for C16-C18 unsaturated fatty acids. It was suggested that it may also stimulate fatty acid oxidation. At the villus tip of the crypt-villus axis of the small intestine may sensitize epithelial cells to apoptosis specifically triggered by the death ligand TRAIL. May have a role in the survival of glioma cells. This is Long-chain-fatty-acid--CoA ligase 5 from Homo sapiens (Human).